The primary structure comprises 264 residues: Thymidylate synthase (264 aa).

Residue Arg-21 coordinates dUMP. His-51 contacts (6R)-5,10-methylene-5,6,7,8-tetrahydrofolate. Cys-146 functions as the Nucleophile in the catalytic mechanism. DUMP-binding positions include 166 to 169 (RSAD), Asn-177, and 207 to 209 (HIY). Position 169 (Asp-169) interacts with (6R)-5,10-methylene-5,6,7,8-tetrahydrofolate. Ala-263 provides a ligand contact to (6R)-5,10-methylene-5,6,7,8-tetrahydrofolate.

This sequence belongs to the thymidylate synthase family. Bacterial-type ThyA subfamily. As to quaternary structure, homodimer.

Its subcellular location is the cytoplasm. It catalyses the reaction dUMP + (6R)-5,10-methylene-5,6,7,8-tetrahydrofolate = 7,8-dihydrofolate + dTMP. It functions in the pathway pyrimidine metabolism; dTTP biosynthesis. Catalyzes the reductive methylation of 2'-deoxyuridine-5'-monophosphate (dUMP) to 2'-deoxythymidine-5'-monophosphate (dTMP) while utilizing 5,10-methylenetetrahydrofolate (mTHF) as the methyl donor and reductant in the reaction, yielding dihydrofolate (DHF) as a by-product. This enzymatic reaction provides an intracellular de novo source of dTMP, an essential precursor for DNA biosynthesis. The sequence is that of Thymidylate synthase from Brucella canis (strain ATCC 23365 / NCTC 10854 / RM-666).